We begin with the raw amino-acid sequence, 1146 residues long: Ankyrin repeat domain-containing protein 24 (1146 aa).

5 ANK repeats span residues 81–110 (EGKS…NVMS), 114–143 (AGYN…VVDV), 147–176 (SGWT…HLNP), 180–209 (SGAT…AAND), and 213–242 (QGRT…QPGI). Disordered stretches follow at residues 272–320 (RPSP…PDDR), 607–627 (REME…GAQA), and 766–785 (ERVR…GDTT). The segment covering 286–297 (EASSQNSMSSHG) has biased composition (polar residues). A coiled-coil region spans residues 320–517 (RDAYEEIVRL…QALRQQETRE (198 aa)). Residues 714-1110 (AAEASEKLQV…AARDHSSVVA (397 aa)) adopt a coiled-coil conformation.

In terms of assembly, homodimer. Interacts (via C-terminal domain) with TRIOBP (via C-terminal domain) isoform 4; recruits TRIOBP isoform 4 to stereocilia rootlets.

It localises to the cell membrane. It is found in the cell projection. Its subcellular location is the stereocilium. Its function is as follows. Component of the stereocilia rootlet in hair cells of inner ear. Bridges the apical plasma membrane with the lower rootlet and maintains normal distribution of TRIOBP, thereby reinforcing stereocilia insertion points and organizing rootlets for hearing with long-term resilience. The sequence is that of Ankyrin repeat domain-containing protein 24 from Homo sapiens (Human).